A 2353-amino-acid chain; its full sequence is C2 domain-containing protein 3 (2353 aa).

The segment at 1 to 27 (MKQRKGQGSGGSRGRKKRGLSDISPST) is disordered. Phosphoserine is present on Ser466. Disordered regions lie at residues 488–508 (KVLE…RNRN) and 549–568 (GVPP…AGPP). Positions 496 to 507 (KLKKRSAGKRNR) are enriched in basic residues. Residues 521 to 678 (DAQTMTLSVD…IQSELLSFSD (158 aa)) enclose the C2 1 domain. Ser728 carries the post-translational modification Phosphoserine. C2 domains follow at residues 787–919 (SHNL…SRLL), 985–1147 (QPTA…HRED), 1171–1339 (SSGL…TGWY), and 1403–1533 (EPAT…TLTV). The disordered stretch occupies residues 1569–1591 (HELDSMDCSSHSESEQLPRRNDE). The region spanning 1617 to 1745 (TTAEVRLTQE…SGFQFVCGWY (129 aa)) is the C2 6 domain. Positions 1822-1846 (SKELDFSSPGRSDTTRSQASRHEEH) are disordered. Residues 1830-1839 (PGRSDTTRSQ) show a composition bias toward polar residues. Ser1891 is subject to Phosphoserine. 4 disordered regions span residues 1972-2032 (ALSS…NGGR), 2084-2118 (TSPW…PGPF), 2130-2269 (LSSP…QSLL), and 2301-2334 (PAAT…LNLP). The segment covering 2007–2016 (PLVRAPDKGT) has biased composition (basic and acidic residues). Polar residues predominate over residues 2084–2098 (TSPWSSVISDTSEVI). Phosphoserine occurs at positions 2114 and 2132. A compositionally biased stretch (polar residues) spans 2181-2198 (SGAQQSSTFVGWSSPQTD). Basic and acidic residues predominate over residues 2236–2253 (SRRENHKGPPIDSSDIRQ). Residues 2254 to 2267 (RQVTTGSETSTKQS) show a composition bias toward polar residues.

In terms of assembly, interacts with IFT88, BBS4 and PCM1. Interacts with OFD1; OFD1 may act as a negative regulator of C2CD3. Associates with the BBSome complex.

Its subcellular location is the cytoplasm. The protein localises to the cytoskeleton. It localises to the cilium basal body. It is found in the microtubule organizing center. The protein resides in the centrosome. Its subcellular location is the centriole. In terms of biological role, component of the centrioles that acts as a positive regulator of centriole elongation. Promotes assembly of centriolar distal appendage, a structure at the distal end of the mother centriole that acts as an anchor of the cilium, and is required for recruitment of centriolar distal appendages proteins CEP83, SCLT1, CEP89, FBF1 and CEP164. Not required for centriolar satellite integrity or RAB8 activation. Required for primary cilium formation. Required for sonic hedgehog/SHH signaling and for proteolytic processing of GLI3. The protein is C2 domain-containing protein 3 (C2CD3) of Homo sapiens (Human).